Reading from the N-terminus, the 602-residue chain is Protein SHORT-ROOT 1 (602 aa).

Positions 12–55 (AASEQQQQQQQSASYNSRSTTSSGSRSSSHQTNASYSYYHHSSN) are enriched in low complexity. 3 disordered regions span residues 12–69 (AASE…YYYG), 101–145 (DFSS…TAAG), and 165–185 (DFSS…AVGG). The segment covering 56–68 (SGGGGGGGGGYYY) has biased composition (gly residues). Over residues 122–145 (PPASSTPTGTAPTPPLSTSSTAAG) the composition is skewed to low complexity. Gly residues predominate over residues 173–185 (SGGGTASSGAVGG). Residues 183–601 (VGGGGGGRWA…QPLVWASAWR (419 aa)) form the GRAS domain. Residues 190–253 (RWASQLLLEC…LTASGPRTLR (64 aa)) form a leucine repeat I (LRI) region. The segment at 272-349 (ALRFQELSPW…PHLSITTVVS (78 aa)) is VHIID. Residues 311–315 (FHILD) carry the VHIID motif. Positions 365 to 401 (EIGQRMEKFARLMGVPFRFRAVHHSGDLAELDLDALD) are leucine repeat II (LRII). A PFYRE region spans residues 411–517 (LAVNCVNSLR…ERGAGRAIVD (107 aa)). The SAW stretch occupies residues 520-601 (SCPASESMER…QPLVWASAWR (82 aa)).

The protein belongs to the GRAS family. Interacts with SCR1. Interacts with SMOS1. As to expression, expressed in leaves and roots. Detected in the stele, the endodermis and part of the cortex.

It localises to the nucleus. Transcription factor required for the asymmetric cell division involved in radial pattern formation in roots. Essential for both cell division and cell specification. The chain is Protein SHORT-ROOT 1 from Oryza sativa subsp. japonica (Rice).